The chain runs to 183 residues: UPF0397 protein PBPRA2239 (183 aa).

5 helical membrane passes run 8-28, 41-61, 69-89, 110-130, and 147-167; these read VVLI…MFGI, AVLA…VGFI, FAGW…GLII, FALF…CSAY, and LIII…YILT.

Belongs to the UPF0397 family.

It is found in the cell membrane. This is UPF0397 protein PBPRA2239 from Photobacterium profundum (strain SS9).